A 274-amino-acid polypeptide reads, in one-letter code: Large ribosomal subunit protein uL2 (274 aa).

A disordered region spans residues 195–274 (VGNSDHGLES…SKYIIERRKK (80 aa)). 2 stretches are compositionally biased toward basic residues: residues 209 to 220 (GRSRWQGRRPRN) and 244 to 264 (PRSR…KKQS).

The protein belongs to the universal ribosomal protein uL2 family. As to quaternary structure, part of the 50S ribosomal subunit. Forms a bridge to the 30S subunit in the 70S ribosome.

Its function is as follows. One of the primary rRNA binding proteins. Required for association of the 30S and 50S subunits to form the 70S ribosome, for tRNA binding and peptide bond formation. It has been suggested to have peptidyltransferase activity; this is somewhat controversial. Makes several contacts with the 16S rRNA in the 70S ribosome. This Bacteroides fragilis (strain ATCC 25285 / DSM 2151 / CCUG 4856 / JCM 11019 / LMG 10263 / NCTC 9343 / Onslow / VPI 2553 / EN-2) protein is Large ribosomal subunit protein uL2.